The primary structure comprises 33 residues: Ice-structuring protein SS-3 (33 aa).

It belongs to the type-I AFP family.

In terms of biological role, antifreeze proteins lower the blood freezing point. The chain is Ice-structuring protein SS-3 from Myoxocephalus scorpius (Shorthorn sculpin).